Reading from the N-terminus, the 272-residue chain is Secretagogin (272 aa).

6 consecutive EF-hand domains span residues 8-43, 53-89, 101-136, 145-180, 193-228, and 237-272; these read LDAAGFLQIWQHFDADDNGYIEGKELDDFFRHMLKK, ERVQQIKKSFMSAYDATFDGRLQIEELANMILPQEEN, DNSVEFMKIWRKYDADSSGYISAAELKNFLKDLFLQ, KLDEYTDAMMKIFDKNKDGRLDLNDLARILALQENF, ERKRDFEKIFAHYDVSRTGALEGPEVDGFVKDMMEL, and DLDKFRECLLTHCDMNKDGKIQKSELALCLGLKHKP. 5 residues coordinate Ca(2+): Asp-21, Asp-23, Asn-25, Tyr-27, and Glu-32. Asp-114, Asp-116, Ser-118, Tyr-120, Glu-125, Asp-158, Asn-160, Asp-162, Arg-164, Asp-169, Asp-206, Ser-208, Thr-210, Glu-217, Asp-250, Asn-252, Asp-254, Lys-256, and Glu-261 together coordinate Ca(2+).

The protein localises to the cytoplasm. The polypeptide is Secretagogin (scgn) (Danio rerio (Zebrafish)).